Reading from the N-terminus, the 275-residue chain is Phosphonoacetaldehyde hydrolase (275 aa).

Catalysis depends on Asp-15, which acts as the Nucleophile. Positions 15 and 17 each coordinate Mg(2+). The Schiff-base intermediate with substrate role is filled by Lys-56. Asp-189 provides a ligand contact to Mg(2+).

This sequence belongs to the HAD-like hydrolase superfamily. PhnX family. Homodimer. Mg(2+) is required as a cofactor.

The catalysed reaction is phosphonoacetaldehyde + H2O = acetaldehyde + phosphate + H(+). Involved in phosphonate degradation. The chain is Phosphonoacetaldehyde hydrolase from Pseudomonas paraeruginosa (strain DSM 24068 / PA7) (Pseudomonas aeruginosa (strain PA7)).